Reading from the N-terminus, the 880-residue chain is Alanine--tRNA ligase (880 aa).

Residues His-567, His-571, Cys-669, and His-673 each coordinate Zn(2+).

This sequence belongs to the class-II aminoacyl-tRNA synthetase family. Requires Zn(2+) as cofactor.

Its subcellular location is the cytoplasm. It carries out the reaction tRNA(Ala) + L-alanine + ATP = L-alanyl-tRNA(Ala) + AMP + diphosphate. In terms of biological role, catalyzes the attachment of alanine to tRNA(Ala) in a two-step reaction: alanine is first activated by ATP to form Ala-AMP and then transferred to the acceptor end of tRNA(Ala). Also edits incorrectly charged Ser-tRNA(Ala) and Gly-tRNA(Ala) via its editing domain. The sequence is that of Alanine--tRNA ligase from Bacillus thuringiensis (strain Al Hakam).